We begin with the raw amino-acid sequence, 97 residues long: Large ribosomal subunit protein bL28 (97 aa).

It belongs to the bacterial ribosomal protein bL28 family.

The polypeptide is Large ribosomal subunit protein bL28 (Sphingopyxis alaskensis (strain DSM 13593 / LMG 18877 / RB2256) (Sphingomonas alaskensis)).